Here is a 583-residue protein sequence, read N- to C-terminus: Isocitrate dehydrogenase kinase/phosphatase (583 aa).

ATP is bound by residues 315–321 (APGIRGM) and Lys336. Asp371 is a catalytic residue.

Belongs to the AceK family.

The protein resides in the cytoplasm. It catalyses the reaction L-seryl-[isocitrate dehydrogenase] + ATP = O-phospho-L-seryl-[isocitrate dehydrogenase] + ADP + H(+). Its function is as follows. Bifunctional enzyme which can phosphorylate or dephosphorylate isocitrate dehydrogenase (IDH) on a specific serine residue. This is a regulatory mechanism which enables bacteria to bypass the Krebs cycle via the glyoxylate shunt in response to the source of carbon. When bacteria are grown on glucose, IDH is fully active and unphosphorylated, but when grown on acetate or ethanol, the activity of IDH declines drastically concomitant with its phosphorylation. The sequence is that of Isocitrate dehydrogenase kinase/phosphatase from Salmonella enteritidis PT4 (strain P125109).